Consider the following 165-residue polypeptide: MTGRLDEDLKDVTLLGNQNTKYLFEYSPEILEVFDNNHPNRDYFVKFNCPEFTSLCPKTGQPDFATIYISYIPEQKMVESKSLKLYLFSFRNHGDFHEDCMNVIMNDLIKLMDPRYIEVWGKFTPRGGISIDPYCNYGRPGTKYEQMADYRMMNHDLYPETIDNR.

Catalysis depends on Cys-56, which acts as the Thioimide intermediate. Asp-63 (proton donor) is an active-site residue. Residues 78 to 80 and 97 to 98 each bind substrate; these read VES and HE.

It belongs to the GTP cyclohydrolase I family. QueF type 1 subfamily.

It is found in the cytoplasm. It catalyses the reaction 7-aminomethyl-7-carbaguanine + 2 NADP(+) = 7-cyano-7-deazaguanine + 2 NADPH + 3 H(+). It functions in the pathway tRNA modification; tRNA-queuosine biosynthesis. Its function is as follows. Catalyzes the NADPH-dependent reduction of 7-cyano-7-deazaguanine (preQ0) to 7-aminomethyl-7-deazaguanine (preQ1). The chain is NADPH-dependent 7-cyano-7-deazaguanine reductase from Bacillus cereus (strain ATCC 14579 / DSM 31 / CCUG 7414 / JCM 2152 / NBRC 15305 / NCIMB 9373 / NCTC 2599 / NRRL B-3711).